The following is a 557-amino-acid chain: Aerobic glycerol-3-phosphate dehydrogenase (557 aa).

Residue D21 to E49 coordinates FAD.

It belongs to the FAD-dependent glycerol-3-phosphate dehydrogenase family. It depends on FAD as a cofactor.

Its subcellular location is the cytoplasm. It catalyses the reaction a quinone + sn-glycerol 3-phosphate = dihydroxyacetone phosphate + a quinol. It functions in the pathway polyol metabolism; glycerol degradation via glycerol kinase pathway; glycerone phosphate from sn-glycerol 3-phosphate (aerobic route): step 1/1. This Staphylococcus aureus (strain USA300) protein is Aerobic glycerol-3-phosphate dehydrogenase (glpD).